The following is a 488-amino-acid chain: Glutamyl-tRNA(Gln) amidotransferase subunit A (488 aa).

Catalysis depends on charge relay system residues K78 and S153. Residue S177 is the Acyl-ester intermediate of the active site.

It belongs to the amidase family. GatA subfamily. As to quaternary structure, heterotrimer of A, B and C subunits.

The enzyme catalyses L-glutamyl-tRNA(Gln) + L-glutamine + ATP + H2O = L-glutaminyl-tRNA(Gln) + L-glutamate + ADP + phosphate + H(+). Its function is as follows. Allows the formation of correctly charged Gln-tRNA(Gln) through the transamidation of misacylated Glu-tRNA(Gln) in organisms which lack glutaminyl-tRNA synthetase. The reaction takes place in the presence of glutamine and ATP through an activated gamma-phospho-Glu-tRNA(Gln). This Solidesulfovibrio magneticus (strain ATCC 700980 / DSM 13731 / RS-1) (Desulfovibrio magneticus) protein is Glutamyl-tRNA(Gln) amidotransferase subunit A.